Here is a 443-residue protein sequence, read N- to C-terminus: MTKIYHFIGIKGSGMSALALMLHQMGHKVQGSDVDKYYFTQRGLEQAGIKILPFDAKNIQADYEIIAGNAFRPDNNVEIAYANEHGISYKRYHEFLGSFMRDFVSFGVAGAHGKTSTTGILSHVLSNITDTSYLIGDGTGRGSAGAKYFVFESDEYERHFMPYHPEYSIITNIDFDHPDYFTSLEDVFNAFNDYAKQITKGLFIYGEDEQLRRITSEAPIYYYGFEKGNDFVAHDLLRSTTGSTFKVSYRGQELGEFHIPTFGRHNIMNATAVIGLLYVSGFDLNLVREHLKTFAGVKRRFTEKVVNGTVIIDDFAHHPTEIIATLDAARQKYPSKEIVAIFQPHTFTRTIALLDEFADALNQADAVYLAQIYGSAREVDHGDVKVEDLAEKIVKRVQVVSVDNVSPLLDHDNAVYVFMGAGDIQTYEYSFERLLSNLTSNVQ.

110–116 (GAHGKTS) contributes to the ATP binding site.

This sequence belongs to the MurCDEF family.

The protein resides in the cytoplasm. It catalyses the reaction UDP-N-acetyl-alpha-D-muramate + L-alanine + ATP = UDP-N-acetyl-alpha-D-muramoyl-L-alanine + ADP + phosphate + H(+). It participates in cell wall biogenesis; peptidoglycan biosynthesis. Functionally, cell wall formation. This chain is UDP-N-acetylmuramate--L-alanine ligase, found in Streptococcus gordonii (strain Challis / ATCC 35105 / BCRC 15272 / CH1 / DL1 / V288).